The chain runs to 143 residues: MFMGEFLHSIDTKGRIIVPSKFRDNLGSSFVVTRGLDKCLFAYPMDEWKILEEKLKQLPLTKKDARAFTRFFFSGAIECEVDKQGRINIPANLRNYAGLEKDCNVIGVSNRVEFWANDAWEDYVTESEDSFAEIAENLMDFDI.

SpoVT-AbrB domains lie at 5–47 (EFLH…PMDE) and 76–119 (AIEC…ANDA).

It belongs to the MraZ family. Forms oligomers.

The protein resides in the cytoplasm. The protein localises to the nucleoid. This Oceanobacillus iheyensis (strain DSM 14371 / CIP 107618 / JCM 11309 / KCTC 3954 / HTE831) protein is Transcriptional regulator MraZ.